A 65-amino-acid chain; its full sequence is uncharacterized protein (65 aa).

This is an uncharacterized protein from Treponema pallidum (strain Nichols).